We begin with the raw amino-acid sequence, 251 residues long: Cytochrome P450 monooxygenase ppzG (251 aa).

A heme-binding site is contributed by cysteine 250.

It belongs to the cytochrome P450 family. It depends on heme as a cofactor.

Its pathway is secondary metabolite biosynthesis. Functionally, cytochrome P450 monooxygenase; part of the gene cluster that mediates the biosynthesis of pyrrolopyrazines, secondary metabolites showing insecticidal activity. The role of ppzG within the pathway has still to be determined. The single multifunctional NRPS ppzA is sufficient to produce peramine via condensation of 1-pyrroline-5-carboxylate and arginine, N-methylation of the alpha-amino group of arginine and reduction of the thioester and the cyclization to form an iminium ion resulting in release from the peptide synthetase. Deprotonation of this intermediate and oxidation of the pyrroline ring would give rise to peramine. In Epichloe species that produce only peramine, the peramine synthetase gene is not localized in a gene cluster, in contrast to Metarhizium species that contain additional pyrrolopyrazine biosynthesis genes. The 2-oxoglutarate-Fe(II) type oxidoreductase ppzC hydroxylates peramine to yield the newly identified compound 8-hydroxyperamine whereas ppzD converts L-proline into trans-4-hydroxy-L-proline, a precursor of peramine biosynthesis. The sequence is that of Cytochrome P450 monooxygenase ppzG from Metarhizium rileyi (strain RCEF 4871) (Nomuraea rileyi).